The sequence spans 408 residues: Acetate kinase (408 aa).

Position 7 (Asn7) interacts with Mg(2+). Residue Lys14 participates in ATP binding. Substrate is bound at residue Arg91. Asp148 serves as the catalytic Proton donor/acceptor. Residues 208-212 and 283-285 each bind ATP; these read HLGNG and DLR. A Mg(2+)-binding site is contributed by Glu388.

The protein belongs to the acetokinase family. In terms of assembly, homodimer. Mg(2+) is required as a cofactor. It depends on Mn(2+) as a cofactor.

The protein localises to the cytoplasm. The enzyme catalyses acetate + ATP = acetyl phosphate + ADP. The protein operates within metabolic intermediate biosynthesis; acetyl-CoA biosynthesis; acetyl-CoA from acetate: step 1/2. In terms of biological role, catalyzes the formation of acetyl phosphate from acetate and ATP. Can also catalyze the reverse reaction. The sequence is that of Acetate kinase from Borrelia hermsii (strain HS1 / DAH).